A 339-amino-acid chain; its full sequence is Tetraacyldisaccharide 4'-kinase (339 aa).

An ATP-binding site is contributed by 62–69 (VAGGTGKT).

It belongs to the LpxK family.

It catalyses the reaction a lipid A disaccharide + ATP = a lipid IVA + ADP + H(+). The protein operates within glycolipid biosynthesis; lipid IV(A) biosynthesis; lipid IV(A) from (3R)-3-hydroxytetradecanoyl-[acyl-carrier-protein] and UDP-N-acetyl-alpha-D-glucosamine: step 6/6. Functionally, transfers the gamma-phosphate of ATP to the 4'-position of a tetraacyldisaccharide 1-phosphate intermediate (termed DS-1-P) to form tetraacyldisaccharide 1,4'-bis-phosphate (lipid IVA). In Xylella fastidiosa (strain M12), this protein is Tetraacyldisaccharide 4'-kinase.